The sequence spans 271 residues: Bifunctional protein FolD (271 aa).

NADP(+) is bound by residues 154-156 (GRS), Ser181, and Ile222.

This sequence belongs to the tetrahydrofolate dehydrogenase/cyclohydrolase family. Homodimer.

The catalysed reaction is (6R)-5,10-methylene-5,6,7,8-tetrahydrofolate + NADP(+) = (6R)-5,10-methenyltetrahydrofolate + NADPH. It carries out the reaction (6R)-5,10-methenyltetrahydrofolate + H2O = (6R)-10-formyltetrahydrofolate + H(+). It participates in one-carbon metabolism; tetrahydrofolate interconversion. In terms of biological role, catalyzes the oxidation of 5,10-methylenetetrahydrofolate to 5,10-methenyltetrahydrofolate and then the hydrolysis of 5,10-methenyltetrahydrofolate to 10-formyltetrahydrofolate. The protein is Bifunctional protein FolD of Thermotoga maritima (strain ATCC 43589 / DSM 3109 / JCM 10099 / NBRC 100826 / MSB8).